Here is a 274-residue protein sequence, read N- to C-terminus: Protein LIKE COV 3 (274 aa).

The Cytoplasmic portion of the chain corresponds to 1–60 (METRERDLERLIPMHKSGASPRDVVLSVPPSPLASPIHVAGKEAIYKVIRSWASKKFMTG). Residues 61–81 (CVILLPIAVTFYFTWWFIHFV) traverse the membrane as a helical segment. Residues 82-93 (DGFFSPIYTHLG) are Extracellular-facing. Residues 94–114 (INMFGLGFVTSITFIFMVGVF) form a helical membrane-spanning segment. Residues 115 to 274 (MSSWLGASVL…VCLSLVLAWT (160 aa)) lie on the Cytoplasmic side of the membrane.

This sequence belongs to the plant COV1 protein family.

It localises to the membrane. The protein is Protein LIKE COV 3 of Arabidopsis thaliana (Mouse-ear cress).